The following is a 394-amino-acid chain: T-cell acute lymphocytic leukemia protein 1 (394 aa).

Positions 1-17 are enriched in basic and acidic residues; that stretch reads MSLKMMERLSTDMDGTR. Residues 1–49 are disordered; that stretch reads MSLKMMERLSTDMDGTRDVASPPARQDAAEPERTVELSGVKEGAAPNSP. Repeat copies occupy residues 83–89, 94–100, 105–111, 116–122, 127–133, 149–155, and 167–173. The tract at residues 83–173 is 7 X 7 AA approximate repeats of [TS]-E-L-C-R-[AP]-P; that stretch reads TELCRATLTP…TATTELCRPP (91 aa). The bHLH domain maps to 262-314; sequence VRRIFTNSRERWRQQNVNGAFAELRKLIPTHPPDKKLSKNEILRLAMKYINFL. The tract at residues 347 to 394 is disordered; sequence LSPNSSCGSSLDGAPSPDSYSEEHDALDSKHSRNLHQAMLPIDGSGQR. A compositionally biased stretch (basic and acidic residues) spans 367–377; it reads SEEHDALDSKH.

As to expression, first expressed in patches on the ventral side of the embryo in a region that will give rise to hematopoietic tissue. By late neurula stages, expressed throughout the ventral blood island region. By tailbud stages, expression extends to probable vascular progenitor cells, but is excluded from the presumptive liver anlage. Also expressed in the central nervous system at the tailbud stage.

Its subcellular location is the nucleus. Functionally, transcription factor that acts synergistically with lmo2 and gata1 to specify embryonic dorsal mesoderm to a hematopoietic fate. The chain is T-cell acute lymphocytic leukemia protein 1 from Xenopus laevis (African clawed frog).